Consider the following 639-residue polypeptide: Putative cyclic beta-1,2-glucan modification protein (639 aa).

6 consecutive transmembrane segments (helical) span residues 34–54 (ALFT…IVRW), 69–89 (PAWT…ALFG), 96–116 (LLIA…QVFL), 144–164 (WTAV…ALLL), 185–205 (FALP…FSWI), and 227–247 (FALA…AGYM).

It localises to the cell membrane. In Rhizobium meliloti (strain 1021) (Ensifer meliloti), this protein is Putative cyclic beta-1,2-glucan modification protein (cgmA).